A 515-amino-acid chain; its full sequence is Lysine--tRNA ligase (515 aa).

Residues Glu-425 and Glu-432 each contribute to the Mg(2+) site.

The protein belongs to the class-II aminoacyl-tRNA synthetase family. In terms of assembly, homodimer. It depends on Mg(2+) as a cofactor.

Its subcellular location is the cytoplasm. The enzyme catalyses tRNA(Lys) + L-lysine + ATP = L-lysyl-tRNA(Lys) + AMP + diphosphate. This Cupriavidus metallidurans (strain ATCC 43123 / DSM 2839 / NBRC 102507 / CH34) (Ralstonia metallidurans) protein is Lysine--tRNA ligase.